A 104-amino-acid chain; its full sequence is L-rhamnose mutarotase (104 aa).

A substrate-binding site is contributed by Y18. H22 serves as the catalytic Proton donor. Substrate contacts are provided by residues Y41 and 76 to 77 (WW).

The protein belongs to the rhamnose mutarotase family. Homodimer.

The protein resides in the cytoplasm. It catalyses the reaction alpha-L-rhamnose = beta-L-rhamnose. It functions in the pathway carbohydrate metabolism; L-rhamnose metabolism. Involved in the anomeric conversion of L-rhamnose. The chain is L-rhamnose mutarotase from Pectobacterium carotovorum subsp. carotovorum (strain PC1).